A 555-amino-acid polypeptide reads, in one-letter code: Urocanate hydratase (555 aa).

NAD(+)-binding positions include 51–52 (GG), Gln-129, 175–177 (GMG), Glu-195, Arg-200, 241–242 (NA), 262–266 (QTSAH), 272–273 (YL), and Tyr-321. Residue Cys-409 is part of the active site. NAD(+) is bound at residue Gly-491.

This sequence belongs to the urocanase family. It depends on NAD(+) as a cofactor.

The protein localises to the cytoplasm. It catalyses the reaction 4-imidazolone-5-propanoate = trans-urocanate + H2O. It participates in amino-acid degradation; L-histidine degradation into L-glutamate; N-formimidoyl-L-glutamate from L-histidine: step 2/3. Functionally, catalyzes the conversion of urocanate to 4-imidazolone-5-propionate. The chain is Urocanate hydratase from Rhizorhabdus wittichii (strain DSM 6014 / CCUG 31198 / JCM 15750 / NBRC 105917 / EY 4224 / RW1) (Sphingomonas wittichii).